Consider the following 206-residue polypeptide: Small ribosomal subunit protein uS4 (206 aa).

Residues 96–156 (CRLDNVVYRM…EKSSNQLRIV (61 aa)) enclose the S4 RNA-binding domain.

The protein belongs to the universal ribosomal protein uS4 family. As to quaternary structure, part of the 30S ribosomal subunit. Contacts protein S5. The interaction surface between S4 and S5 is involved in control of translational fidelity.

Functionally, one of the primary rRNA binding proteins, it binds directly to 16S rRNA where it nucleates assembly of the body of the 30S subunit. With S5 and S12 plays an important role in translational accuracy. This chain is Small ribosomal subunit protein uS4, found in Pseudomonas putida (strain W619).